The following is a 370-amino-acid chain: Cathepsin B-like cysteine proteinase 3 (370 aa).

The first 16 residues, Met1–Ala16, serve as a signal peptide directing secretion. The propeptide occupies Phe17 to Pro91. 6 disulfide bridges follow: Cys105–Cys134, Cys117–Cys162, Cys153–Cys210, Cys154–Cys158, Cys190–Cys214, and Cys198–Cys202. Cys120 is an active-site residue. N-linked (GlcNAc...) asparagine glycosylation is present at Asn138. Catalysis depends on residues His284 and Asn304.

This sequence belongs to the peptidase C1 family.

The protein is Cathepsin B-like cysteine proteinase 3 (cpr-3) of Caenorhabditis elegans.